A 116-amino-acid chain; its full sequence is Hydrogenase maturation factor HypA (116 aa).

Ni(2+) is bound at residue histidine 2. 4 residues coordinate Zn(2+): cysteine 73, cysteine 76, cysteine 90, and cysteine 93.

This sequence belongs to the HypA/HybF family.

Its function is as follows. Involved in the maturation of [NiFe] hydrogenases. Required for nickel insertion into the metal center of the hydrogenase. The sequence is that of Hydrogenase maturation factor HypA from Escherichia coli O6:H1 (strain CFT073 / ATCC 700928 / UPEC).